The following is a 489-amino-acid chain: Zinc finger protein 772 (489 aa).

One can recognise a KRAB domain in the interval 27-98; sequence VNFEDVFVYF…DWVDMTLAVA (72 aa). 10 C2H2-type zinc fingers span residues 144-166, 172-194, 266-288, 294-316, 322-344, 350-372, 378-400, 406-428, 434-456, and 462-484; these read YPCG…QETH, YMCV…QKQH, YKCS…QRVH, YECG…QRIH, YECG…QRVH, YKCS…ESIH, YECS…WSVH, YECI…QRVH, YVCS…HRIH, and YKCS…WKIH.

The protein belongs to the krueppel C2H2-type zinc-finger protein family.

The protein localises to the nucleus. Functionally, may be involved in transcriptional regulation. In Homo sapiens (Human), this protein is Zinc finger protein 772 (ZNF772).